Consider the following 295-residue polypeptide: Probable porphobilinogen deaminase (295 aa).

Cys234 carries the post-translational modification S-(dipyrrolylmethanemethyl)cysteine.

The protein belongs to the HMBS family. Dipyrromethane serves as cofactor.

The catalysed reaction is 4 porphobilinogen + H2O = hydroxymethylbilane + 4 NH4(+). The protein operates within porphyrin-containing compound metabolism; protoporphyrin-IX biosynthesis; coproporphyrinogen-III from 5-aminolevulinate: step 2/4. Tetrapolymerization of the monopyrrole PBG into the hydroxymethylbilane pre-uroporphyrinogen in several discrete steps. This is Probable porphobilinogen deaminase (hemC) from Thermoplasma acidophilum (strain ATCC 25905 / DSM 1728 / JCM 9062 / NBRC 15155 / AMRC-C165).